The chain runs to 1167 residues: MELPFVTHLFLPLVFLTGLCSPFNLDEHHPRLFPGPPEAEFGYSVLQHVGGGQRWMLVGAPWDGPSGDRRGDVYRCPVGGAHNAPCAKGHLGDYQLGNSSHPAVNMHLGMSLLETDGDGGFMACAPLWSRACGSSVFSSGICARVDASFQPQGSLAPTAQRCPTYMDVVIVLDGSNSIYPWSEVQTFLRRLVGKLFIDPEQIQVGLVQYGESPVHEWSLGDFRTKEEVVRAAKNLSRREGRETKTAQAIMVACTEGFSQSHGGRPEAARLLVVVTDGESHDGEELPAALKACEAGRVTRYGIAVLGHYLRRQRDPSSFLREIRTIASDPDERFFFNVTDEAALTDIVDALGDRIFGLEGSHAENESSFGLEMSQIGFSTHRLKDGILFGMVGAYDWGGSVLWLEGGHRLFPPRMALEDEFPPALQNHAAYLGYSVSSMLLRGGRRLFLSGAPRFRHRGKVIAFQLKKDGAVRVAQSLQGEQIGSYFGSELCPLDTDRDGTTDVLLVAAPMFLGPQNKETGRVYVYLVGQQSLLTLQGTLQPEPPQDARFGFAMGALPDLNQDGFADVAVGAPLEDGHQGALYLYHGTQSGVRPHPAQRIAAASMPHALSYFGRSVDGRLDLDGDDLVDVAVGAQGAAILLSSRPIVHLTPSLEVTPQAISVVQRDCRRRGQEAVCLTAALCFQVTSRTPGRWDHQFYMRFTASLDEWTAGARAAFDGSGQRLSPRRLRLSVGNVTCEQLHFHVLDTSDYLRPVALTVTFALDNTTKPGPVLNEGSPTSIQKLVPFSKDCGPDNECVTDLVLQVNMDIRGSRKAPFVVRGGRRKVLVSTTLENRKENAYNTSLSLIFSRNLHLASLTPQRESPIKVECAAPSAHARLCSVGHPVFQTGAKVTFLLEFEFSCSSLLSQVFVKLTASSDSLERNGTLQDNTAQTSAYIQYEPHLLFSSESTLHRYEVHPYGTLPVGPGPEFKTTLRVQNLGCYVVSGLIISALLPAVAHGGNYFLSLSQVITNNASCIVQNLTEPPGPPVHPEELQHTNRLNGSNTQCQVVRCHLGQLAKGTEVSVGLLRLVHNEFFRRAKFKSLTVVSTFELGTEEGSVLQLTEASRWSESLLEVVQTRPILISLWILIGSVLGGLLLLALLVFCLWKLGFFAHKKIPEEEKREEKLEQ.

The signal sequence occupies residues 1–22 (MELPFVTHLFLPLVFLTGLCSP). Over 23–1122 (FNLDEHHPRL…VVQTRPILIS (1100 aa)) the chain is Extracellular. 2 FG-GAP repeats span residues 24 to 85 (NLDE…HNAP) and 95 to 154 (QLGN…PQGS). An intrachain disulfide couples Cys-76 to Cys-86. N-linked (GlcNAc...) asparagine glycosylation is found at Asn-98, Asn-234, Asn-336, and Asn-364. A VWFA domain is found at 167–350 (DVVIVLDGSN…AALTDIVDAL (184 aa)). FG-GAP repeat units follow at residues 361–412 (HAEN…LFPP), 417–470 (EDEF…KDGA), 472–534 (RVAQ…SLLT), 535–593 (LQGT…GVRP), and 597–657 (QRIA…VTPQ). The Ca(2+) site is built by Asp-494, Asp-496, Asp-498, Asp-502, Asp-558, Asn-560, Asp-562, Asp-566, Asp-620, Asp-622, Asp-624, and Asp-628. 2 disulfides stabilise this stretch: Cys-666/Cys-675 and Cys-681/Cys-736. N-linked (GlcNAc...) asparagine glycans are attached at residues Asn-733 and Asn-763. A disulfide bond links Cys-789 and Cys-795. Residues Asn-839, Asn-921, Asn-1011, Asn-1018, and Asn-1039 are each glycosylated (N-linked (GlcNAc...) asparagine). A helical membrane pass occupies residues 1123-1145 (LWILIGSVLGGLLLLALLVFCLW). The Cytoplasmic segment spans residues 1146–1167 (KLGFFAHKKIPEEEKREEKLEQ).

It belongs to the integrin alpha chain family. As to quaternary structure, heterodimer of an alpha and a beta subunit. Alpha-10 associates with beta-1. In terms of tissue distribution, widely expressed with highest expression in muscle and heart. Found in articular cartilage.

The protein localises to the membrane. Integrin alpha-10/beta-1 is a receptor for collagen. This Homo sapiens (Human) protein is Integrin alpha-10 (ITGA10).